Consider the following 196-residue polypeptide: Lipoprotein signal peptidase (196 aa).

A run of 3 helical transmembrane segments spans residues 43-63, 75-95, and 97-117; these read LMLKVTSILNMVYTWNYGISF, AIFLITNMIIVCYLYHLMICS, and TIGSFVGYNFVIGGAIGNLID. Catalysis depends on residues Asp-126 and Asp-144. The chain crosses the membrane as a helical span at residues 135–155; sequence YSFPVFNLADCFITLGVIILI.

Belongs to the peptidase A8 family.

Its subcellular location is the cell inner membrane. It catalyses the reaction Release of signal peptides from bacterial membrane prolipoproteins. Hydrolyzes -Xaa-Yaa-Zaa-|-(S,diacylglyceryl)Cys-, in which Xaa is hydrophobic (preferably Leu), and Yaa (Ala or Ser) and Zaa (Gly or Ala) have small, neutral side chains.. It participates in protein modification; lipoprotein biosynthesis (signal peptide cleavage). In terms of biological role, this protein specifically catalyzes the removal of signal peptides from prolipoproteins. This chain is Lipoprotein signal peptidase, found in Rickettsia typhi (strain ATCC VR-144 / Wilmington).